Reading from the N-terminus, the 160-residue chain is Putative 4-hydroxy-4-methyl-2-oxoglutarate aldolase (160 aa).

Residues 76–79 (GGNL) and Arg98 contribute to the substrate site. Residue Asp99 participates in a divalent metal cation binding.

Belongs to the class II aldolase/RraA-like family. In terms of assembly, homotrimer. A divalent metal cation is required as a cofactor.

It catalyses the reaction 4-hydroxy-4-methyl-2-oxoglutarate = 2 pyruvate. The enzyme catalyses oxaloacetate + H(+) = pyruvate + CO2. In terms of biological role, catalyzes the aldol cleavage of 4-hydroxy-4-methyl-2-oxoglutarate (HMG) into 2 molecules of pyruvate. Also contains a secondary oxaloacetate (OAA) decarboxylase activity due to the common pyruvate enolate transition state formed following C-C bond cleavage in the retro-aldol and decarboxylation reactions. The polypeptide is Putative 4-hydroxy-4-methyl-2-oxoglutarate aldolase (Deinococcus radiodurans (strain ATCC 13939 / DSM 20539 / JCM 16871 / CCUG 27074 / LMG 4051 / NBRC 15346 / NCIMB 9279 / VKM B-1422 / R1)).